Consider the following 341-residue polypeptide: Heterogeneous nuclear ribonucleoproteins A2/B1 (341 aa).

2 consecutive RRM domains span residues 9-92 and 100-179; these read RKLF…ESGK and KKLF…LSRQ. Lys10 is covalently cross-linked (Glycyl lysine isopeptide (Lys-Gly) (interchain with G-Cter in SUMO2)). Ser17 bears the Phosphoserine mark. The residue at position 26 (Arg26) is an Omega-N-methylarginine. Ser73 is modified (phosphoserine). Lys92 carries the post-translational modification N6,N6-dimethyllysine; alternate. A Glycyl lysine isopeptide (Lys-Gly) (interchain with G-Cter in SUMO2); alternate cross-link involves residue Lys92. Glycyl lysine isopeptide (Lys-Gly) (interchain with G-Cter in SUMO2) cross-links involve residues Lys100, Lys108, and Lys125. Phosphothreonine is present on Thr128. Ser137 carries the phosphoserine modification. Lys140 is covalently cross-linked (Glycyl lysine isopeptide (Lys-Gly) (interchain with G-Cter in SUMO2)). Thr147 carries the post-translational modification Phosphothreonine. Glycyl lysine isopeptide (Lys-Gly) (interchain with G-Cter in SUMO2); alternate cross-links involve residues Lys156 and Lys161. Lys156 and Lys161 each carry N6-acetyllysine; alternate. At Thr164 the chain carries Phosphothreonine. Residue Lys174 forms a Glycyl lysine isopeptide (Lys-Gly) (interchain with G-Cter in SUMO2) linkage. A phosphoserine mark is found at Ser177 and Ser189. A disordered region spans residues 181-341; the sequence is MQEVQSSRSG…SGGYGGRSRY (161 aa). Gly residues predominate over residues 190–211; the sequence is GRGGNFGFGDSRGGGGNFGPGP. Arg191 carries the post-translational modification Asymmetric dimethylarginine; alternate. Arg191 carries the post-translational modification Dimethylated arginine; alternate. An Omega-N-methylarginine; alternate modification is found at Arg191. Ser200 is modified (phosphoserine). Arg201 carries the post-translational modification Asymmetric dimethylarginine; alternate. Arg201 bears the Dimethylated arginine; alternate mark. Residue Arg201 is modified to Omega-N-methylarginine; alternate. Ser213 bears the Phosphoserine mark. At Arg216 the chain carries Omega-N-methylarginine. A phosphoserine mark is found at Ser219 and Ser224. Arg226 carries the post-translational modification Omega-N-methylarginine. Phosphoserine is present on Ser247. Arg254 carries the post-translational modification Asymmetric dimethylarginine; alternate. Arg254 is modified (omega-N-methylarginine; alternate). The segment at 296-335 is nuclear targeting sequence; sequence QQPSNYGPMKSGNFGGSRNMGGPYGGGNYGPGGSGGSGGY. Positions 308-341 are enriched in gly residues; the sequence is NFGGSRNMGGPYGGGNYGPGGSGGSGGYGGRSRY. Residue Ser312 is modified to Phosphoserine. Arg313 carries the post-translational modification Omega-N-methylarginine. At Tyr319 the chain carries Phosphotyrosine. Phosphoserine occurs at positions 329 and 332. Tyr335 carries the post-translational modification Phosphotyrosine. Arg338 is modified (omega-N-methylarginine).

As to quaternary structure, identified in the spliceosome C complex. Identified in a IGF2BP1-dependent mRNP granule complex containing untranslated mRNAs. Interacts with IGF2BP1. Interacts with C9orf72. Interacts with DGCR8. Interacts with TARDBP. Interacts with CKAP5. Interacts with PPIA/CYPA. Interacts (via C-terminus) with FAM76B; the interaction results in retention of HNRNPA2B1 in the nucleus and inhibition of the NF-kappa-B-mediated inflammatory pathway. Interacts with NF-kappa-B inhibitors NFKBIA and NFKBIE; the interaction may be mediated by the RRM2 domain of HNRNPA2B1, and HNRNPA2B1 may interact simultaneously with FAM76B and either NFKBIA or NFKBIE to form a complex. Sumoylated in exosomes, promoting miRNAs-binding. Post-translationally, asymmetric dimethylation at Arg-254 constitutes the major methylation site. According to a report, methylation affects subcellular location and promotes nuclear localization. According to another report, methylation at Arg-254 does not influence nucleocytoplasmic shuttling.

Its subcellular location is the nucleus. It localises to the nucleoplasm. The protein localises to the cytoplasmic granule. The protein resides in the secreted. It is found in the extracellular exosome. Heterogeneous nuclear ribonucleoprotein (hnRNP) that associates with nascent pre-mRNAs, packaging them into hnRNP particles. The hnRNP particle arrangement on nascent hnRNA is non-random and sequence-dependent and serves to condense and stabilize the transcripts and minimize tangling and knotting. Packaging plays a role in various processes such as transcription, pre-mRNA processing, RNA nuclear export, subcellular location, mRNA translation and stability of mature mRNAs. Forms hnRNP particles with at least 20 other different hnRNP and heterogeneous nuclear RNA in the nucleus. Involved in transport of specific mRNAs to the cytoplasm in oligodendrocytes and neurons: acts by specifically recognizing and binding the A2RE (21 nucleotide hnRNP A2 response element) or the A2RE11 (derivative 11 nucleotide oligonucleotide) sequence motifs present on some mRNAs, and promotes their transport to the cytoplasm. Specifically binds single-stranded telomeric DNA sequences, protecting telomeric DNA repeat against endonuclease digestion. Also binds other RNA molecules, such as primary miRNA (pri-miRNAs): acts as a nuclear 'reader' of the N6-methyladenosine (m6A) mark by specifically recognizing and binding a subset of nuclear m6A-containing pri-miRNAs. Binding to m6A-containing pri-miRNAs promotes pri-miRNA processing by enhancing binding of DGCR8 to pri-miRNA transcripts. Involved in miRNA sorting into exosomes following sumoylation, possibly by binding (m6A)-containing pre-miRNAs. Acts as a regulator of efficiency of mRNA splicing, possibly by binding to m6A-containing pre-mRNAs. Plays a role in the splicing of pyruvate kinase PKM by binding repressively to sequences flanking PKM exon 9, inhibiting exon 9 inclusion and resulting in exon 10 inclusion and production of the PKM M2 isoform. This is Heterogeneous nuclear ribonucleoproteins A2/B1 (HNRNPA2B1) from Bos taurus (Bovine).